Reading from the N-terminus, the 1479-residue chain is ESX secretion system protein EccC (1479 aa).

Over 1-235 the chain is Cytoplasmic; sequence MSQLWVLYET…SQEGDGDPRG (235 aa). A helical transmembrane segment spans residues 236-256; it reads LWLMVLPPVMMLLVIGAVALI. Residues 257-259 lie on the Extracellular side of the membrane; that stretch reads QPR. The chain crosses the membrane as a helical span at residues 260 to 280; sequence GVFIMISIAMFATTIVTSTAQ. The Cytoplasmic portion of the chain corresponds to 281-1479; that stretch reads YMREKKARQM…DQKIQIPKVE (1199 aa). Positions 291 to 321 form a coiled coil; it reads RKEKRRRIYTNYLEQKREELQALSEKQRNVL. FtsK domains are found at residues 652-848 and 984-1168; these read NDVV…NDSK and QSDY…SEKF. ATP is bound at residue 672-679; it reads GTTGSGKS. The active site involves Glu785. Residues 1004 to 1009, Asn1036, Asp1105, Ile1197, Asp1206, 1287 to 1291, and Ile1475 each bind ATP; these read GYGKST and RKGKT. The FtsK 3 domain occupies 1267-1444; that stretch reads VRPVAINMRT…ILVTKKSEQS (178 aa).

Whole protein oligomerizes in native gels. Part of the ESX / type VII secretion system (T7SS), which is composed of cytosolic and membrane components. The ESX membrane complex is composed of EccB, EccC and EccD.

Its subcellular location is the cell membrane. EsxB binding to the third FtsK domain causes multimerization; a subsequent unknown step relieves the allosteric inhibition of linker 2 on FtsK domain 1, activating the ATPase activity. Part of the ESX specialized secretion system, which exports proteins from the cell including EsxA (ESAT-6) and EsxB (CFP-10). Might be the translocase subunit. Probably only the first FtsK domain can hydrolyze ATP. In Geobacillus thermodenitrificans (strain NG80-2), this protein is ESX secretion system protein EccC.